A 221-amino-acid polypeptide reads, in one-letter code: Ras-related protein Rab-27A (221 aa).

N-acetylserine is present on Ser2. Ser2 bears the Phosphoserine mark. 16–24 (GDSGVGKTS) is a GTP binding site. The Effector region signature appears at 38–46 (FITTVGIDF). Residues 74 to 78 (DTAGQ), 133 to 136 (NKSD), and 163 to 165 (SAA) each bind GTP. The cysteines at positions 123 and 188 are disulfide-linked. 2 S-geranylgeranyl cysteine lipidation sites follow: Cys219 and Cys221. Cys221 carries the post-translational modification Cysteine methyl ester.

This sequence belongs to the small GTPase superfamily. Rab family. As to quaternary structure, binds SYTL1, SLAC2B, MYRIP, SYTL3, SYTL4 and SYTL5. Interacts with RPH3A and RPH3A. Binds MLPH and SYTL2. Interacts with UNC13D. Does not interact with the BLOC-3 complex (heterodimer of HPS1 and HPS4). Interacts (GDP-bound form preferentially) with DENND10.

Its subcellular location is the membrane. It localises to the melanosome. The protein resides in the late endosome. It is found in the lysosome. The enzyme catalyses GTP + H2O = GDP + phosphate + H(+). Regulated by guanine nucleotide exchange factors (GEFs) which promote the exchange of bound GDP for free GTP, GTPase activating proteins (GAPs) which increase the GTP hydrolysis activity, and GDP dissociation inhibitors which inhibit the dissociation of the nucleotide from the GTPase. Activated by GEFs such as DENND10. Its function is as follows. Small GTPase which cycles between active GTP-bound and inactive GDP-bound states. In its active state, binds to a variety of effector proteins to regulate homeostasis of late endocytic pathway, including endosomal positioning, maturation and secretion. Plays a role in cytotoxic granule exocytosis in lymphocytes. Required for both granule maturation and granule docking and priming at the immunologic synapse. The polypeptide is Ras-related protein Rab-27A (RAB27A) (Canis lupus familiaris (Dog)).